A 658-amino-acid chain; its full sequence is Probable transketolase (658 aa).

Residue His-24 coordinates substrate. Thiamine diphosphate-binding positions include His-64 and 113–115 (GPL). Mg(2+) is bound at residue Asp-154. The thiamine diphosphate site is built by Gly-155 and Asn-184. Mg(2+) contacts are provided by Asn-184 and Ile-186. Residues His-259, Arg-354, and Ser-381 each coordinate substrate. His-259 is a binding site for thiamine diphosphate. Glu-408 serves as the catalytic Proton donor. Phe-434 is a thiamine diphosphate binding site. Residues His-458, Asp-466, and Arg-517 each coordinate substrate.

This sequence belongs to the transketolase family. In terms of assembly, homodimer. Requires Mg(2+) as cofactor. Ca(2+) serves as cofactor. It depends on Mn(2+) as a cofactor. Co(2+) is required as a cofactor. The cofactor is thiamine diphosphate.

The enzyme catalyses D-sedoheptulose 7-phosphate + D-glyceraldehyde 3-phosphate = aldehydo-D-ribose 5-phosphate + D-xylulose 5-phosphate. Its function is as follows. Necessary for high-efficiency recombination chromosomal DNA during genetic transformation. In terms of biological role, catalyzes the transfer of a two-carbon ketol group from a ketose donor to an aldose acceptor, via a covalent intermediate with the cofactor thiamine pyrophosphate. The polypeptide is Probable transketolase (tkt) (Streptococcus pneumoniae serotype 4 (strain ATCC BAA-334 / TIGR4)).